The chain runs to 368 residues: Molybdenum import ATP-binding protein ModC (368 aa).

An ABC transporter domain is found at 1–231; sequence MKGLQVAFKQ…QAMRPWQSFS (231 aa). 33–40 contacts ATP; that stretch reads GRSGAGKT. Residues 292 to 363 form the Mop domain; sequence KTSIRNIIEA…IKGVSVTQRD (72 aa).

It belongs to the ABC transporter superfamily. Molybdate importer (TC 3.A.1.8) family. In terms of assembly, the complex is composed of two ATP-binding proteins (ModC), two transmembrane proteins (ModB) and a solute-binding protein (ModA).

The protein resides in the cell inner membrane. It carries out the reaction molybdate(out) + ATP + H2O = molybdate(in) + ADP + phosphate + H(+). In terms of biological role, part of the ABC transporter complex ModABC involved in molybdenum import. Responsible for energy coupling to the transport system. The protein is Molybdenum import ATP-binding protein ModC of Vibrio vulnificus (strain YJ016).